The chain runs to 95 residues: Acylphosphatase (95 aa).

The Acylphosphatase-like domain maps to 5–93; it reads RAHVFIRGKV…GEFKDFKILP (89 aa). Residues R20 and N38 contribute to the active site.

Belongs to the acylphosphatase family.

The catalysed reaction is an acyl phosphate + H2O = a carboxylate + phosphate + H(+). The polypeptide is Acylphosphatase (acyP) (Pyrobaculum aerophilum (strain ATCC 51768 / DSM 7523 / JCM 9630 / CIP 104966 / NBRC 100827 / IM2)).